The primary structure comprises 167 residues: Large ribosomal subunit protein uL10 (167 aa).

Belongs to the universal ribosomal protein uL10 family. As to quaternary structure, part of the ribosomal stalk of the 50S ribosomal subunit. The N-terminus interacts with L11 and the large rRNA to form the base of the stalk. The C-terminus forms an elongated spine to which L12 dimers bind in a sequential fashion forming a multimeric L10(L12)X complex.

In terms of biological role, forms part of the ribosomal stalk, playing a central role in the interaction of the ribosome with GTP-bound translation factors. This chain is Large ribosomal subunit protein uL10, found in Streptococcus thermophilus (strain CNRZ 1066).